We begin with the raw amino-acid sequence, 317 residues long: Beta-ketoacyl-[acyl-carrier-protein] synthase III (317 aa).

Catalysis depends on residues Cys-112 and His-244. Residues 245 to 249 (QANIR) form an ACP-binding region. The active site involves Asn-274.

The protein belongs to the thiolase-like superfamily. FabH family. In terms of assembly, homodimer.

The protein resides in the cytoplasm. It carries out the reaction malonyl-[ACP] + acetyl-CoA + H(+) = 3-oxobutanoyl-[ACP] + CO2 + CoA. Its pathway is lipid metabolism; fatty acid biosynthesis. Functionally, catalyzes the condensation reaction of fatty acid synthesis by the addition to an acyl acceptor of two carbons from malonyl-ACP. Catalyzes the first condensation reaction which initiates fatty acid synthesis and may therefore play a role in governing the total rate of fatty acid production. Possesses both acetoacetyl-ACP synthase and acetyl transacylase activities. Its substrate specificity determines the biosynthesis of branched-chain and/or straight-chain of fatty acids. The sequence is that of Beta-ketoacyl-[acyl-carrier-protein] synthase III from Rickettsia massiliae (strain Mtu5).